The chain runs to 453 residues: MLTCFKAYDIRGKLGEELNEDIAWRIGRAYGEFLKPKTIVLGGDVRLTSETLKLALAKGLQDAGVDVLDIGMSGTEEIYFATFHLGVDGGIEVTASHNPMDYNGMKLVREGARPISGDTGLRDVQRLAEANDFPPVDETKRGRYQQINLRDAYVDHLFGYINVKNLTPLKLVINSGNGAAGPVVDAIEARFKALGAPVELIKVHNTPDGNFPNGIPNPLLPECRDDTRNAVIKHGADMGIAFDGDFDRCFLFDEKGQFIEGYYIVGLLAEAFLEKNPGAKIIHDPRLSWNTVDVVTAAGTPVMSKTGHAFIKERMRKEDAIYGGEMSAHHYFRDFAYCDTGMIPWLLVAELVCLKGKTLGELVRDRMAAFPASGEINSKLAHPVEAINRVEQHFSRDAGGGSHRWHQHDLCRLAALTCASSNTEPVVRLNVESRGDVPLMEEKTKLILELLNK.

Ser-96 functions as the Phosphoserine intermediate in the catalytic mechanism. Residues Ser-96, Asp-243, Asp-245, and Asp-247 each contribute to the Mg(2+) site.

This sequence belongs to the phosphohexose mutase family. Mg(2+) serves as cofactor.

It carries out the reaction alpha-D-mannose 1-phosphate = D-mannose 6-phosphate. It functions in the pathway nucleotide-sugar biosynthesis; GDP-alpha-D-mannose biosynthesis; alpha-D-mannose 1-phosphate from D-fructose 6-phosphate: step 2/2. The protein operates within bacterial outer membrane biogenesis; LPS O-antigen biosynthesis. Involved in GDP-mannose biosynthesis which serves as the activated sugar nucleotide precursor for mannose residues in cell surface polysaccharides. This enzyme participates in synthesis of the LPS O7 antigen. This Escherichia coli protein is Phosphomannomutase (manB).